The sequence spans 317 residues: Transaldolase (317 aa).

Catalysis depends on Lys-132, which acts as the Schiff-base intermediate with substrate.

It belongs to the transaldolase family. Type 1 subfamily. As to quaternary structure, homodimer.

It localises to the cytoplasm. It catalyses the reaction D-sedoheptulose 7-phosphate + D-glyceraldehyde 3-phosphate = D-erythrose 4-phosphate + beta-D-fructose 6-phosphate. The protein operates within carbohydrate degradation; pentose phosphate pathway; D-glyceraldehyde 3-phosphate and beta-D-fructose 6-phosphate from D-ribose 5-phosphate and D-xylulose 5-phosphate (non-oxidative stage): step 2/3. Functionally, transaldolase is important for the balance of metabolites in the pentose-phosphate pathway. This chain is Transaldolase, found in Shewanella denitrificans (strain OS217 / ATCC BAA-1090 / DSM 15013).